Consider the following 192-residue polypeptide: FAD-linked sulfhydryl oxidase erv2 (192 aa).

The Cytoplasmic portion of the chain corresponds to Met-1–Gln-8. The chain crosses the membrane as a helical; Signal-anchor span at residues Val-9 to Val-29. The Lumenal segment spans residues Asp-30–Gly-192. Residues His-61–Tyr-162 enclose the ERV/ALR sulfhydryl oxidase domain. Residues Trp-74, Cys-138, His-141, Asn-145, and Tyr-162 each coordinate FAD. An intrachain disulfide couples Cys-138 to Cys-155.

Requires FAD as cofactor.

It is found in the endoplasmic reticulum membrane. Its subcellular location is the cytoplasm. The protein localises to the nucleus. The catalysed reaction is 2 R'C(R)SH + O2 = R'C(R)S-S(R)CR' + H2O2. Functionally, FAD-dependent sulfhydryl oxidase that catalyzes disulfide bond formation in the endoplasmic reticulum lumen. The protein is FAD-linked sulfhydryl oxidase erv2 (erv2) of Schizosaccharomyces pombe (strain 972 / ATCC 24843) (Fission yeast).